Reading from the N-terminus, the 132-residue chain is Fatty acid-binding protein 12 (132 aa).

A fatty acid is bound by residues R107 and 127-129; that span reads RTY.

Belongs to the calycin superfamily. Fatty-acid binding protein (FABP) family. As to expression, highly expressed in adult retina and testis with lower levels in cerebral cortex, kidney and epididymis. In the retina, strongly expressed in the ganglion cell layer and throughout the inner nuclear layer in amacrine and bipolar cells. Not expressed in the outer nuclear layer. In the testis, detected in the seminiferous tubules.

May play a role in lipid transport. The sequence is that of Fatty acid-binding protein 12 from Rattus norvegicus (Rat).